The sequence spans 490 residues: Acetyl-coenzyme A carboxylase carboxyl transferase subunit beta, chloroplastic (490 aa).

The CoA carboxyltransferase N-terminal domain maps to 228-490 (LWVQCENCYG…FKLHAFFPLN (263 aa)). Zn(2+) contacts are provided by C232, C235, C251, and C254. The C4-type zinc-finger motif lies at 232–254 (CENCYGLNYKKLLKSKMNICDQC).

The protein belongs to the AccD/PCCB family. As to quaternary structure, acetyl-CoA carboxylase is a heterohexamer composed of biotin carboxyl carrier protein, biotin carboxylase and 2 subunits each of ACCase subunit alpha and ACCase plastid-coded subunit beta (accD). It depends on Zn(2+) as a cofactor.

It is found in the plastid. It localises to the chloroplast stroma. The catalysed reaction is N(6)-carboxybiotinyl-L-lysyl-[protein] + acetyl-CoA = N(6)-biotinyl-L-lysyl-[protein] + malonyl-CoA. It participates in lipid metabolism; malonyl-CoA biosynthesis; malonyl-CoA from acetyl-CoA: step 1/1. Its function is as follows. Component of the acetyl coenzyme A carboxylase (ACC) complex. Biotin carboxylase (BC) catalyzes the carboxylation of biotin on its carrier protein (BCCP) and then the CO(2) group is transferred by the transcarboxylase to acetyl-CoA to form malonyl-CoA. The sequence is that of Acetyl-coenzyme A carboxylase carboxyl transferase subunit beta, chloroplastic from Eucalyptus globulus subsp. globulus (Tasmanian blue gum).